The following is a 224-amino-acid chain: 7-cyano-7-deazaguanine synthase (224 aa).

10-20 (LSGGLDSATVV) serves as a coordination point for ATP. The Zn(2+) site is built by Cys189, Cys199, Cys202, and Cys205.

It belongs to the QueC family. The cofactor is Zn(2+).

It catalyses the reaction 7-carboxy-7-deazaguanine + NH4(+) + ATP = 7-cyano-7-deazaguanine + ADP + phosphate + H2O + H(+). Its pathway is purine metabolism; 7-cyano-7-deazaguanine biosynthesis. Its function is as follows. Catalyzes the ATP-dependent conversion of 7-carboxy-7-deazaguanine (CDG) to 7-cyano-7-deazaguanine (preQ(0)). The polypeptide is 7-cyano-7-deazaguanine synthase (Pseudomonas aeruginosa (strain LESB58)).